Consider the following 382-residue polypeptide: D-galactonate dehydratase (382 aa).

D183 lines the Mg(2+) pocket. The active-site Proton donor is H185. Residues E209 and E235 each coordinate Mg(2+). Residue H285 is the Proton acceptor of the active site.

This sequence belongs to the mandelate racemase/muconate lactonizing enzyme family. GalD subfamily. Mg(2+) is required as a cofactor.

The catalysed reaction is D-galactonate = 2-dehydro-3-deoxy-D-galactonate + H2O. The protein operates within carbohydrate acid metabolism; D-galactonate degradation; D-glyceraldehyde 3-phosphate and pyruvate from D-galactonate: step 1/3. Its function is as follows. Catalyzes the dehydration of D-galactonate to 2-keto-3-deoxy-D-galactonate. In Variovorax paradoxus (strain S110), this protein is D-galactonate dehydratase.